A 567-amino-acid polypeptide reads, in one-letter code: 2-succinyl-5-enolpyruvyl-6-hydroxy-3-cyclohexene-1-carboxylate synthase (567 aa).

Belongs to the TPP enzyme family. MenD subfamily. Homodimer. It depends on Mg(2+) as a cofactor. Mn(2+) is required as a cofactor. Thiamine diphosphate serves as cofactor.

The catalysed reaction is isochorismate + 2-oxoglutarate + H(+) = 5-enolpyruvoyl-6-hydroxy-2-succinyl-cyclohex-3-ene-1-carboxylate + CO2. The protein operates within quinol/quinone metabolism; 1,4-dihydroxy-2-naphthoate biosynthesis; 1,4-dihydroxy-2-naphthoate from chorismate: step 2/7. It functions in the pathway quinol/quinone metabolism; menaquinone biosynthesis. Functionally, catalyzes the thiamine diphosphate-dependent decarboxylation of 2-oxoglutarate and the subsequent addition of the resulting succinic semialdehyde-thiamine pyrophosphate anion to isochorismate to yield 2-succinyl-5-enolpyruvyl-6-hydroxy-3-cyclohexene-1-carboxylate (SEPHCHC). The protein is 2-succinyl-5-enolpyruvyl-6-hydroxy-3-cyclohexene-1-carboxylate synthase of Yersinia pestis bv. Antiqua (strain Antiqua).